A 386-amino-acid chain; its full sequence is Succinate--CoA ligase [ADP-forming] subunit beta (386 aa).

The region spanning 9-244 (KEILRKYGVS…LDEEDPKEIE (236 aa)) is the ATP-grasp domain. ATP contacts are provided by residues K46, 53–55 (GRG), E99, C102, and E107. Mg(2+) contacts are provided by N199 and D213. Substrate is bound by residues N264 and 321 to 323 (GIM).

The protein belongs to the succinate/malate CoA ligase beta subunit family. Heterotetramer of two alpha and two beta subunits. Mg(2+) serves as cofactor.

The catalysed reaction is succinate + ATP + CoA = succinyl-CoA + ADP + phosphate. It carries out the reaction GTP + succinate + CoA = succinyl-CoA + GDP + phosphate. The protein operates within carbohydrate metabolism; tricarboxylic acid cycle; succinate from succinyl-CoA (ligase route): step 1/1. Functionally, succinyl-CoA synthetase functions in the citric acid cycle (TCA), coupling the hydrolysis of succinyl-CoA to the synthesis of either ATP or GTP and thus represents the only step of substrate-level phosphorylation in the TCA. The beta subunit provides nucleotide specificity of the enzyme and binds the substrate succinate, while the binding sites for coenzyme A and phosphate are found in the alpha subunit. In Bacillus pumilus (strain SAFR-032), this protein is Succinate--CoA ligase [ADP-forming] subunit beta.